The following is a 300-amino-acid chain: MNGILNINKPPGLTSFGVVSKVRHIYSQKKVGHGGMLDPSATGVIPVFLGSATRLIEYLSSVRKTYLAEIELGTETDSYDSEGEITSRKSCEHITADMVRNALPDFLGEITQIPPMYSAVKHRGVRLYNLARQGIEVERNPRKAAIYGIEFLGFASPVLRLRIECGHGTYIRSIAFDLGRKLGCGAYLKTLVRESYGPFHLTTSLDLADLEAAENKGRLADILLPPEAAVGHLPRITLDDESITRLVNGLEIRLEMTGQPEAMAVYSAENRFAAVIRPETDGSWHPAKVFLSPCPKKNAD.

Residue Asp-38 is the Nucleophile of the active site.

Belongs to the pseudouridine synthase TruB family. Type 1 subfamily.

It catalyses the reaction uridine(55) in tRNA = pseudouridine(55) in tRNA. Its function is as follows. Responsible for synthesis of pseudouridine from uracil-55 in the psi GC loop of transfer RNAs. The protein is tRNA pseudouridine synthase B of Dehalococcoides mccartyi (strain ATCC BAA-2266 / KCTC 15142 / 195) (Dehalococcoides ethenogenes (strain 195)).